Consider the following 1489-residue polypeptide: Chromosome partition protein MukB (1489 aa).

34 to 41 (GGNGAGKS) serves as a coordination point for ATP. Coiled coils occupy residues 326-418 (LEAD…QYNQ), 444-472 (LETF…QTAH), 509-602 (RHLA…QRAP), 780-805 (RAAR…ATLS), 835-919 (EAEI…GNQL), 977-1116 (EMLS…AKAG), and 1209-1266 (VEAI…QNVS). The interval 666-783 (PGGSEDSRLN…TVPIFGRAAR (118 aa)) is flexible hinge.

This sequence belongs to the SMC family. MukB subfamily. As to quaternary structure, homodimerization via its hinge domain. Binds to DNA via its C-terminal region. Interacts, and probably forms a ternary complex, with MukE and MukF via its C-terminal region. The complex formation is stimulated by calcium or magnesium. Interacts with tubulin-related protein FtsZ.

It localises to the cytoplasm. The protein localises to the nucleoid. In terms of biological role, plays a central role in chromosome condensation, segregation and cell cycle progression. Functions as a homodimer, which is essential for chromosome partition. Involved in negative DNA supercoiling in vivo, and by this means organize and compact chromosomes. May achieve or facilitate chromosome segregation by condensation DNA from both sides of a centrally located replisome during cell division. The sequence is that of Chromosome partition protein MukB from Citrobacter koseri (strain ATCC BAA-895 / CDC 4225-83 / SGSC4696).